A 522-amino-acid polypeptide reads, in one-letter code: TNF receptor-associated factor 6 (522 aa).

Residues 1–354 (MSLLNCENSC…EAQQCNGIYI (354 aa)) are interaction with TAX1BP1. The RING-type zinc-finger motif lies at 70–109 (CPICLMALREAVQTPCGHRFCKACIIKSIRDAGHKCPVDN). A Glycyl lysine isopeptide (Lys-Gly) (interchain with G-Cter in SUMO); alternate cross-link involves residue lysine 124. Lysine 124 is covalently cross-linked (Glycyl lysine isopeptide (Lys-Gly) (interchain with G-Cter in ubiquitin); alternate). Lysine 142 participates in a covalent cross-link: Glycyl lysine isopeptide (Lys-Gly) (interchain with G-Cter in SUMO). 2 TRAF-type zinc fingers span residues 150–202 (DHQA…EDKE) and 203–259 (IHDQ…NHLA). Residues 288–348 (YISEVRNFQE…DKVAEIEAQQ (61 aa)) are a coiled coil. A Glycyl lysine isopeptide (Lys-Gly) (interchain with G-Cter in ubiquitin) cross-link involves residue lysine 319. The MATH domain maps to 350–499 (NGIYIWKIGN…DDTLLVRCEV (150 aa)). Positions 355 to 522 (WKIGNFGMHL…FQPRSTDAGV (168 aa)) are interaction with TANK. Lysine 453 is covalently cross-linked (Glycyl lysine isopeptide (Lys-Gly) (interchain with G-Cter in SUMO)).

Belongs to the TNF receptor-associated factor family. A subfamily. In terms of assembly, homotrimer. Homooligomer. N-terminal region is dimeric while C-terminal region is trimeric; maybe providing a mode of oligomerization. Upon IL1B treatment, forms a complex with PELI1, IRAK1, IRAK4 and MYD88; this complex recruits MAP3K7/TAK1, TAB1 and TAB2 to mediate NF-kappa-B activation. Direct binding of SMAD6 to PELI1 prevents the complex formation and hence negatively regulates IL1R-TLR signaling and eventually NF-kappa-B-mediated gene expression. Binds to TNFRSF5/CD40 and TNFRSF11A/RANK. Associates with NGFR, TNFRSF17, IRAK2, IRAK3, RIPK2, MAP3K1, MAP3K5, MAP3K14, CSK, TRAF, TRAF-interacting protein TRIP and TNF receptor associated protein TDP2. Interacts with IL17R. Interacts with SQSTM1 bridging NTRK1 and NGFR. Forms a ternary complex with SQSTM1 and PRKCZ. Interacts with PELI2 and PELI3. Binds UBE2V1. Interacts with TAX1BP1; this interaction mediates deubiquitination of TRAF6 and inhibition of NF-kappa-B activation. Interacts with ZNF675. Interacts with ARRB1 and ARRB2. Interacts with MAP3K7 and TAB1/MAP3K7IP1; during IL-1 signaling. Interacts with UBE2N. Interacts with TGFBR1, HDAC1 and RANGAP1. Interacts with AKT1, AKT2 and AKT3. Interacts (via TRAF domains) with NUMBL (via C-terminal). Interacts with RBCK1. Interacts with LIMD1 (via LIM domains). Interacts with RSAD2/viperin. Interacts (via C-terminus) with EIF2AK2/PKR (via the kinase catalytic domain). Interacts with ZFAND5. Interacts with IL1RL1. Interacts with TRAFD1. Interacts with AJUBA. Interacts with MAVS/IPS1. Interacts (via TRAF domains) with DYNC2I2 (via WD domains). Interacts with IFIT3 (via N-terminus). Interacts with TICAM2. Interacts with CARD14. Interacts with CD40 and MAP3K8; the interaction is required for ERK activation. Interacts with TICAM1 and this interaction is enhanced in the presence of WDFY1. Interacts with TANK; this interaction increases in response to DNA damage. Interacts with USP10; this interaction increases in response to DNA damage. Interacts with ZC3H12A; this interaction increases in response to DNA damage and is stimulated by TANK. Interacts with WDFY3. Interacts with TRIM13. Interacts with GPS2. Interacts (via C-terminus) with SASH1. Interacts with LRRC19. Interacts with IL17RA and TRAF3IP2. Interacts with TOMM70. Interacts with AMBRA1; interaction is required to mediate 'Lys-63'-linked ubiquitination of ULK1. Interacts with CRBN; this interaction inhibits TLR4-mediated signaling by preventing TRAF6-mediated ubiquitination of ECSIT. In terms of processing, sumoylated on Lys-124, Lys-142 and Lys-453 with SUMO1. Polyubiquitinated on Lys-124 by TRAF3IP2; after cell stimulation with IL17A. Polyubiquitinated on Lys-124; after cell stimulation with IL1B or TGFB. This ligand-induced cell stimulation leads to dimerization/oligomerization of TRAF6 molecules, followed by auto-ubiquitination which involves UBE2N and UBE2V1 and leads to TRAF6 activation. This 'Lys-63' site-specific poly-ubiquitination appears to be associated with the activation of signaling molecules. Endogenous autoubiquitination occurs only for the cytoplasmic form. Deubiquitinated by USP10 in a TANK-dependent manner, leading to the negative regulation of NF-kappaB signaling upon DNA damage. LRRC19 induces 'Lys-63' ubiquitination. Ubiquitinated at Lys-319 by the SCF(FBXL2) complex, leading to its degradation by the proteasome. Post-translationally, (Microbial infection) Deubiquitinated by Epstein-Barr virus BPLF1 on both 'Lys-48' and 'Lys-63'-linked ubiquitin chains; leading to NF-kappa-B signaling inhibition. Expressed in heart, brain, placenta, lung, liver, skeletal muscle, kidney and pancreas.

The protein localises to the cytoplasm. It localises to the cell cortex. The protein resides in the nucleus. Its subcellular location is the lipid droplet. It catalyses the reaction S-ubiquitinyl-[E2 ubiquitin-conjugating enzyme]-L-cysteine + [acceptor protein]-L-lysine = [E2 ubiquitin-conjugating enzyme]-L-cysteine + N(6)-ubiquitinyl-[acceptor protein]-L-lysine.. Its pathway is protein modification; protein ubiquitination. E3 ubiquitin ligase that, together with UBE2N and UBE2V1, mediates the synthesis of 'Lys-63'-linked-polyubiquitin chains conjugated to proteins, such as ECSIT, IKBKG, IRAK1, AKT1 and AKT2. Also mediates ubiquitination of free/unanchored polyubiquitin chain that leads to MAP3K7 activation. Leads to the activation of NF-kappa-B and JUN. Seems to also play a role in dendritic cells (DCs) maturation and/or activation. Represses c-Myb-mediated transactivation, in B-lymphocytes. Adapter protein that seems to play a role in signal transduction initiated via TNF receptor, IL-1 receptor and IL-17 receptor. Regulates osteoclast differentiation by mediating the activation of adapter protein complex 1 (AP-1) and NF-kappa-B, in response to RANK-L stimulation. Together with MAP3K8, mediates CD40 signals that activate ERK in B-cells and macrophages, and thus may play a role in the regulation of immunoglobulin production. Acts as a regulator of the JNK and NF-kappa-B signaling pathways by initiating assembly of heterotypic 'Lys-63'-/'Lys-48'-linked branched ubiquitin chains that are then recognized by TAB2: TRAF6 catalyzes initial 'Lys-63'-linked-polyubiquitin chains that are then branched via 'Lys-48'-linked polyubiquitin by HUWE1. 'Lys-63'-/'Lys-48'-linked branched ubiquitin chains protect 'Lys-63'-linkages from CYLD deubiquitination. Participates also in the TCR signaling by ubiquitinating LAT. This chain is TNF receptor-associated factor 6 (TRAF6), found in Homo sapiens (Human).